A 621-amino-acid chain; its full sequence is F-box only protein 21 (621 aa).

One can recognise an F-box domain in the interval 28 to 77 (SCLVNLPGEVLEYILCCGSLTAADIGRVSSTCRRLRELCQSSGKVWKEQF).

In terms of assembly, interacts with SKP1 and CUL1.

Functionally, substrate-recognition component of the SCF (SKP1-CUL1-F-box protein)-type E3 ubiquitin ligase complex. The polypeptide is F-box only protein 21 (FBXO21) (Pongo abelii (Sumatran orangutan)).